Consider the following 477-residue polypeptide: Polyketide synthase-related protein Dhc1 (477 aa).

The 79-residue stretch at 34 to 112 folds into the Carrier domain; the sequence is EKMTVREGEL…AMTHCVFDRA (79 aa). Serine 72 is modified (O-(pantetheine 4'-phosphoryl)serine). The segment at 161 to 322 is ketoreductase (KR) domain; sequence LTGATSFLGS…AGEVFLENLV (162 aa). Residues 410–435 form a disordered region; sequence VQQQQQQQQRQSQPPRDDAADGSPTE. The segment covering 411–422 has biased composition (low complexity); it reads QQQQQQQQRQSQ. Over residues 424-435 the composition is skewed to basic and acidic residues; it reads PRDDAADGSPTE.

Its pathway is mycotoxin biosynthesis. In terms of biological role, polyketide synthase-related protein; part of the gene cluster that mediates the biosynthesis of 10,11-dehydrocurvularin, a prevalent fungal phytotoxin with heat shock response and immune-modulatory activities. The highly reducing polyketide synthase Dhc3 is responsible for biosynthesis up to the tetraketide stage. The non-reducing polyketide synthase Dhc5 then conducts four additional chain extension cycles, producing the unreduced part of the nascent octaketide from C-1 to C-8 in 10,11-dehydrocurvularin. The role of Dhc1 in 10,11-dehydrocurvularin biosynthesis has not been identified yet. This Alternaria cinerariae protein is Polyketide synthase-related protein Dhc1.